Here is a 651-residue protein sequence, read N- to C-terminus: Acetyl-coenzyme A synthetase (651 aa).

Residues 190-193, Thr-309, and Asn-333 each bind CoA; that span reads RGGR. ATP contacts are provided by residues 385–387, 409–414, Asp-498, and Arg-513; these read GEP and DTWWQT. Ser-521 lines the CoA pocket. Residue Arg-524 coordinates ATP. Residues Val-535, His-537, and Val-540 each coordinate Mg(2+). Arg-582 provides a ligand contact to CoA. N6-acetyllysine is present on Lys-607.

It belongs to the ATP-dependent AMP-binding enzyme family. The cofactor is Mg(2+). Acetylated. Deacetylation by the SIR2-homolog deacetylase activates the enzyme.

The catalysed reaction is acetate + ATP + CoA = acetyl-CoA + AMP + diphosphate. Functionally, catalyzes the conversion of acetate into acetyl-CoA (AcCoA), an essential intermediate at the junction of anabolic and catabolic pathways. AcsA undergoes a two-step reaction. In the first half reaction, AcsA combines acetate with ATP to form acetyl-adenylate (AcAMP) intermediate. In the second half reaction, it can then transfer the acetyl group from AcAMP to the sulfhydryl group of CoA, forming the product AcCoA. The protein is Acetyl-coenzyme A synthetase of Xanthobacter autotrophicus (strain ATCC BAA-1158 / Py2).